The primary structure comprises 151 residues: Ribonuclease H (151 aa).

In terms of domain architecture, RNase H type-1 spans 1–146; sequence MPDLYAYTDG…ADELARAGMA (146 aa). Asp-9, Glu-52, Asp-74, and Asp-138 together coordinate Mg(2+).

It belongs to the RNase H family. As to quaternary structure, monomer. The cofactor is Mg(2+).

Its subcellular location is the cytoplasm. It catalyses the reaction Endonucleolytic cleavage to 5'-phosphomonoester.. In terms of biological role, endonuclease that specifically degrades the RNA of RNA-DNA hybrids. This is Ribonuclease H from Cereibacter sphaeroides (strain ATCC 17029 / ATH 2.4.9) (Rhodobacter sphaeroides).